Consider the following 348-residue polypeptide: MKQFFEFLITTFLLLGLAAADEHIVYWNSTNSLFRNRQPTIEVRMGDVVRFVCPDNEEGRNDGEYLIVYEVTEFAMDDCALESHSREVIRCAPEGTAEKVLRTQQLSGGRREDWKKQKVPPKNVAQLIRQLNPIPNGKEYQPGQTYYYMTTSTGKANGTNHRMYGLCESQNMRLSMKVSASQPHPTRRAPTRRQEDFVTTASAELMGGQEDEDSDNDNAHLLPRDLEGSTNPKFRRPSQLETAGVENQQFMKVVQMAQAGKTGTFENEKEAIAQKSSEKDGWHPVNVQYVADLMNNAYQNADERISYQRDFEIHEENDLAVKSLEYSSSSTSLSTNFAILLAVIYVLY.

The first 20 residues, 1–20, serve as a signal peptide directing secretion; sequence MKQFFEFLITTFLLLGLAAA. An Ephrin RBD domain is found at 21 to 178; it reads DEHIVYWNST…SQNMRLSMKV (158 aa). A glycan (N-linked (GlcNAc...) asparagine) is linked at Asn-28. 2 disulfides stabilise this stretch: Cys-53-Cys-91 and Cys-79-Cys-167. Asn-157 is a glycosylation site (N-linked (GlcNAc...) asparagine). The disordered stretch occupies residues 207–237; that stretch reads GGQEDEDSDNDNAHLLPRDLEGSTNPKFRRP. The GPI-anchor amidated serine moiety is linked to residue Ser-329. Positions 330–348 are cleaved as a propeptide — removed in mature form; sequence STSLSTNFAILLAVIYVLY.

It belongs to the ephrin family. As to quaternary structure, interacts with lat-2. May undergo proteolysis by metalloprotease sup-17 to give rise to a soluble form.

It is found in the cell membrane. Its function is as follows. Regulates the formation or stabilization of cell-cell contacts at several stages of epithelial morphogenesis. In early embryonic development, involved in ventral closure of the epidermis. During male tail morphogenesis, regulates precursor cell sorting together with mab-20 and allows the formation of distinct sensory rays. Probably acts as a ligand for lad-2 to regulate axon guidance of several neurons including SDQL, SDQR, SMD and PLN neurons during neurogenesis. This is Ephrin-4 (efn-4) from Caenorhabditis elegans.